Reading from the N-terminus, the 91-residue chain is N(2)-fixation sustaining protein CowN (91 aa).

The protein belongs to the CowN family.

Functionally, is required to sustain N(2)-dependent growth in the presence of low levels of carbon monoxide (CO). Probably acts by protecting the N(2) fixation ability of the nitrogenase complex, which is inactivated in the presence of CO. The sequence is that of N(2)-fixation sustaining protein CowN from Beijerinckia indica subsp. indica (strain ATCC 9039 / DSM 1715 / NCIMB 8712).